The chain runs to 693 residues: Elongation factor G (693 aa).

Residues 8 to 282 (KNTRNIGIMA…AVIDYLPSPL (275 aa)) form the tr-type G domain. Residues 17–24 (AHIDAGKT), 81–85 (DTPGH), and 135–138 (NKMD) each bind GTP.

This sequence belongs to the TRAFAC class translation factor GTPase superfamily. Classic translation factor GTPase family. EF-G/EF-2 subfamily.

It is found in the cytoplasm. Catalyzes the GTP-dependent ribosomal translocation step during translation elongation. During this step, the ribosome changes from the pre-translocational (PRE) to the post-translocational (POST) state as the newly formed A-site-bound peptidyl-tRNA and P-site-bound deacylated tRNA move to the P and E sites, respectively. Catalyzes the coordinated movement of the two tRNA molecules, the mRNA and conformational changes in the ribosome. In Staphylococcus epidermidis (strain ATCC 35984 / DSM 28319 / BCRC 17069 / CCUG 31568 / BM 3577 / RP62A), this protein is Elongation factor G.